The primary structure comprises 746 residues: Methyl-CpG-binding domain-containing protein 13 (746 aa).

2 consecutive short sequence motifs (nuclear localization signal) follow at residues 13–20 and 44–51; these read ERKVEIRV and IKKLEITN. The MBD domain occupies 29 to 104; that stretch reads VIVEKSAAQG…KESDIEDDDS (76 aa). Disordered stretches follow at residues 131-157, 169-283, 295-328, 348-479, 518-562, and 696-746; these read IDDV…MTSD, LGKK…PTPE, PLDD…KTRT, TKVQ…LKSP, TAAG…SGSA, and EPDT…FSKD. The segment covering 169–180 has biased composition (basic and acidic residues); sequence LGKKEEVKDPIE. The span at 190–199 shows a compositional bias: polar residues; that stretch reads RSQTKASTTE. Over residues 244 to 260 the composition is skewed to basic and acidic residues; it reads SSEKRITRSKVEEKKNE. Residues 256–263 carry the Nuclear localization signal motif; it reads EKKNELSN. The span at 427–451 shows a compositional bias: polar residues; the sequence is VAQSCNEQSSQKPHAAAATSNNRVS. The span at 465–476 shows a compositional bias: basic residues; it reads VGRKPSKDKKTL. Polar residues-rich tracts occupy residues 529-546 and 702-730; these read PKAN…SPLR and KSQG…TNKT. Residues 732 to 746 are compositionally biased toward basic and acidic residues; sequence GKPDDLRFTQSFSKD.

It is found in the nucleus. In terms of biological role, probable transcriptional regulator. This is Methyl-CpG-binding domain-containing protein 13 (MBD13) from Arabidopsis thaliana (Mouse-ear cress).